Reading from the N-terminus, the 486-residue chain is ATP synthase subunit beta (486 aa).

Over residues 1-12 (MTTTAEKTDRPG) the composition is skewed to basic and acidic residues. The disordered stretch occupies residues 1–22 (MTTTAEKTDRPGKPGSSDTSGR). An ATP-binding site is contributed by 171 to 178 (GGAGVGKT).

Belongs to the ATPase alpha/beta chains family. In terms of assembly, F-type ATPases have 2 components, CF(1) - the catalytic core - and CF(0) - the membrane proton channel. CF(1) has five subunits: alpha(3), beta(3), gamma(1), delta(1), epsilon(1). CF(0) has three main subunits: a(1), b(2) and c(9-12). The alpha and beta chains form an alternating ring which encloses part of the gamma chain. CF(1) is attached to CF(0) by a central stalk formed by the gamma and epsilon chains, while a peripheral stalk is formed by the delta and b chains.

It localises to the cell membrane. The enzyme catalyses ATP + H2O + 4 H(+)(in) = ADP + phosphate + 5 H(+)(out). In terms of biological role, produces ATP from ADP in the presence of a proton gradient across the membrane. The catalytic sites are hosted primarily by the beta subunits. This Mycobacterium tuberculosis (strain ATCC 25177 / H37Ra) protein is ATP synthase subunit beta.